Here is a 148-residue protein sequence, read N- to C-terminus: Transcriptional repressor NrdR (148 aa).

A zinc finger lies at 3–32; the sequence is CPKCSSEESKVVDSRQAEDAIRRRRVCESC. Positions 47–137 constitute an ATP-cone domain; the sequence is LLVIKKDDKR…VYRSFKDVSE (91 aa).

Belongs to the NrdR family. It depends on Zn(2+) as a cofactor.

In terms of biological role, negatively regulates transcription of bacterial ribonucleotide reductase nrd genes and operons by binding to NrdR-boxes. This chain is Transcriptional repressor NrdR, found in Lactococcus lactis subsp. lactis (strain IL1403) (Streptococcus lactis).